A 22-amino-acid chain; its full sequence is Myofibril-bound serine protease (22 aa).

Residues 1–22 enclose the Peptidase S1 domain; that stretch reads IVGGYECEAYSKPYQVSINLGY.

It belongs to the peptidase S1 family. Detected in skeletal muscle (at protein level).

It is found in the cytoplasm. Serine protease which degrades the myosin heavy chain and tropomyosin, but not actin. Selectively cleaves Arg-|-Xaa bonds. The chain is Myofibril-bound serine protease from Saurida undosquamis (Brushtooth lizardfish).